The chain runs to 306 residues: Epoxyqueuosine reductase (306 aa).

Residue D131 is the Proton donor of the active site. The 33-residue stretch at 173 to 205 (LDLTYDHPVTDHCGTCTACIDACPTQAIVQPYV) folds into the 4Fe-4S ferredoxin-type domain. The [4Fe-4S] cluster site is built by C185, C188, C191, C195, C211, C238, C241, and C245.

The protein belongs to the QueG family. In terms of assembly, monomer. It depends on cob(II)alamin as a cofactor. [4Fe-4S] cluster serves as cofactor.

The protein localises to the cytoplasm. The catalysed reaction is epoxyqueuosine(34) in tRNA + AH2 = queuosine(34) in tRNA + A + H2O. The protein operates within tRNA modification; tRNA-queuosine biosynthesis. Catalyzes the conversion of epoxyqueuosine (oQ) to queuosine (Q), which is a hypermodified base found in the wobble positions of tRNA(Asp), tRNA(Asn), tRNA(His) and tRNA(Tyr). In Cellulophaga algicola (strain DSM 14237 / IC166 / ACAM 630), this protein is Epoxyqueuosine reductase.